The sequence spans 74 residues: Peptide BmKb1 (74 aa).

Positions 1–22 are cleaved as a signal peptide; it reads MEIKYLLTVFLVLLIVSDHCQA. At K40 the chain carries Lysine amide. A propeptide spanning residues 46–74 is cleaved from the precursor; sequence DLNGYIDHFKNFRKRDAELEELLSKLPIY.

It belongs to the non-disulfide-bridged peptide (NDBP) superfamily. Short antimicrobial peptide (group 4) family. Expressed by the venom gland.

The protein localises to the secreted. It is found in the target cell membrane. Functionally, has antibacterial activity against Gram-positive bacteria S.aureus, M.luteus, B.subtilis, and Gram-negative bacteria E.coli, and P.aeruginosa. This chain is Peptide BmKb1, found in Olivierus martensii (Manchurian scorpion).